Consider the following 412-residue polypeptide: Tyrosine--tRNA ligase 1 (412 aa).

An L-tyrosine-binding site is contributed by tyrosine 41. Residues 46-55 (ATADSLHVGH) carry the 'HIGH' region motif. L-tyrosine contacts are provided by tyrosine 174 and glutamine 178. The short motif at 234–238 (KMGKS) is the 'KMSKS' region element. Lysine 237 contacts ATP. An S4 RNA-binding domain is found at 348 to 411 (LSLTDLLLEH…KKQHLHLRLE (64 aa)).

Belongs to the class-I aminoacyl-tRNA synthetase family. TyrS type 1 subfamily. Homodimer.

It is found in the cytoplasm. It catalyses the reaction tRNA(Tyr) + L-tyrosine + ATP = L-tyrosyl-tRNA(Tyr) + AMP + diphosphate + H(+). Its function is as follows. Catalyzes the attachment of tyrosine to tRNA(Tyr) in a two-step reaction: tyrosine is first activated by ATP to form Tyr-AMP and then transferred to the acceptor end of tRNA(Tyr). In Pseudomonas aeruginosa (strain ATCC 15692 / DSM 22644 / CIP 104116 / JCM 14847 / LMG 12228 / 1C / PRS 101 / PAO1), this protein is Tyrosine--tRNA ligase 1.